Consider the following 627-residue polypeptide: Coiled-coil domain-containing protein 22 (627 aa).

The segment at 1 to 321 is sufficient for interaction with COMMD1; the sequence is MEEADRILIH…VADVPATSQR (321 aa). A sufficicient and required for interaction with CCDC93 region spans residues 1-447; it reads MEEADRILIH…LQDCRELESS (447 aa). Position 410 is a phosphoserine (Ser-410). Residues 448 to 535 are a coiled coil; that stretch reads RRLAEIQELH…NSLSGKLDRT (88 aa).

This sequence belongs to the CCDC22 family. Component of the commander complex consisting of the CCC subcomplex and the retriever subcomplex. Component of the CCC (COMMD/CCDC22/CCDC93) subcomplex consisting of COMMD1, COMMD2, COMMD3, COMMD4, COMMD5, COMMD6, COMMD7, COMMD8, COMMD9, COMMD10, CCDC22 and CCDC93. Forms a coiled-coil heterodimer with CCDC22; this heterodimer interacts with the guanine nucleotide exchange factor DENND10; the interaction is direct. Interacts with CUL1, CUL2, CUL3, SKP1, BTRC. Interacts with SNX17 and SNX31. Interacts with CPNE1 and CPNE4.

Its subcellular location is the endosome. The protein localises to the cytoplasm. The protein resides in the cytoskeleton. It localises to the microtubule organizing center. It is found in the centrosome. In terms of biological role, component of the commander complex that is essential for endosomal recycling of transmembrane cargos; the Commander complex is composed of composed of the CCC subcomplex and the retriever subcomplex. Component of the CCC complex, which is involved in the regulation of endosomal recycling of surface proteins, including integrins, signaling receptor and channels. Involved in regulation of NF-kappa-B signaling. Promotes ubiquitination of I-kappa-B-kinase subunit IKBKB and its subsequent proteasomal degradation leading to NF-kappa-B activation; the function may involve association with COMMD8 and a CUL1-dependent E3 ubiquitin ligase complex. May down-regulate NF-kappa-B activity via association with COMMD1 and involving a CUL2-dependent E3 ubiquitin ligase complex. Regulates the cellular localization of COMM domain-containing proteins, such as COMMD1 and COMMD10. Component of the CCC complex, which is involved in the regulation of endosomal recycling of surface proteins, including integrins, signaling receptor and channels. The CCC complex associates with SNX17, retriever and WASH complexes to prevent lysosomal degradation and promote cell surface recycling of numerous cargos such as integrins ITGA5:ITGB1. Plays a role in copper ion homeostasis. Involved in copper-dependent ATP7A trafficking between the trans-Golgi network and vesicles in the cell periphery; the function is proposed to depend on its association within the CCC complex and cooperation with the WASH complex on early endosomes. The sequence is that of Coiled-coil domain-containing protein 22 (Ccdc22) from Mus musculus (Mouse).